Reading from the N-terminus, the 545-residue chain is CTP synthase (545 aa).

The tract at residues 1 to 266 is amidoligase domain; it reads MTTNYIFVTG…DDYICKRFSL (266 aa). Ser14 serves as a coordination point for CTP. Ser14 is a binding site for UTP. ATP is bound by residues 15 to 20 and Asp72; that span reads SLGKGI. Mg(2+) is bound by residues Asp72 and Glu140. CTP contacts are provided by residues 147–149, 187–192, and Lys223; these read DIE and KTKPTQ. UTP is bound by residues 187 to 192 and Lys223; that span reads KTKPTQ. 239–241 is an ATP binding site; that stretch reads KDV. Residues 291–542 enclose the Glutamine amidotransferase type-1 domain; that stretch reads TIGMVGKYIE…VKAASEYQKR (252 aa). Gly352 is an L-glutamine binding site. Cys379 functions as the Nucleophile; for glutamine hydrolysis in the catalytic mechanism. L-glutamine contacts are provided by residues 380–383, Glu403, and Arg470; that span reads LGMQ. Catalysis depends on residues His515 and Glu517.

The protein belongs to the CTP synthase family. In terms of assembly, homotetramer.

The enzyme catalyses UTP + L-glutamine + ATP + H2O = CTP + L-glutamate + ADP + phosphate + 2 H(+). It catalyses the reaction L-glutamine + H2O = L-glutamate + NH4(+). The catalysed reaction is UTP + NH4(+) + ATP = CTP + ADP + phosphate + 2 H(+). The protein operates within pyrimidine metabolism; CTP biosynthesis via de novo pathway; CTP from UDP: step 2/2. Allosterically activated by GTP, when glutamine is the substrate; GTP has no effect on the reaction when ammonia is the substrate. The allosteric effector GTP functions by stabilizing the protein conformation that binds the tetrahedral intermediate(s) formed during glutamine hydrolysis. Inhibited by the product CTP, via allosteric rather than competitive inhibition. Its function is as follows. Catalyzes the ATP-dependent amination of UTP to CTP with either L-glutamine or ammonia as the source of nitrogen. Regulates intracellular CTP levels through interactions with the four ribonucleotide triphosphates. The sequence is that of CTP synthase from Citrobacter koseri (strain ATCC BAA-895 / CDC 4225-83 / SGSC4696).